A 255-amino-acid chain; its full sequence is Cell division protein DivIB (255 aa).

Residues 1 to 30 (MKNSKVIKLQDRVPKLKNQKKRNKPPVNHR) lie on the Cytoplasmic side of the membrane. The chain crosses the membrane as a helical span at residues 31–51 (LILYISILFLLVLFLIYFRSP). Residues 52–255 (LSNIKKISVF…FKYLDDEKKK (204 aa)) lie on the Extracellular side of the membrane. Residues 53–121 (SNIKKISVFG…NKIDIHIEEY (69 aa)) form the POTRA domain.

Belongs to the FtsQ/DivIB family. DivIB subfamily.

It localises to the cell membrane. In terms of biological role, cell division protein that may be involved in stabilizing or promoting the assembly of the division complex. The polypeptide is Cell division protein DivIB (Bacillus cytotoxicus (strain DSM 22905 / CIP 110041 / 391-98 / NVH 391-98)).